Here is a 329-residue protein sequence, read N- to C-terminus: Neuropeptides B/W receptor type 1 (329 aa).

Residues 1–43 (MHNLTLFESGGDNVSCGGSSLGCPNGSSLAPLPLPQPLAVAVP) lie on the Extracellular side of the membrane. N3, N13, and N25 each carry an N-linked (GlcNAc...) asparagine glycan. A helical transmembrane segment spans residues 44 to 64 (VVYGVICAVGLAGNSAVLYVL). At 65–75 (LRTPRMKTVTN) the chain is on the cytoplasmic side. The chain crosses the membrane as a helical span at residues 76-96 (VFILNLAIADELFTLVLPINI). Residues 97–112 (ADFLLRRWPFGEVMCK) are Extracellular-facing. C111 and C190 form a disulfide bridge. Residues 113 to 133 (LIVAVDQYNTFSSLYFLAVMS) traverse the membrane as a helical segment. Over 134–158 (ADRYLVVLATAESRRVSGRTYGAAR) the chain is Cytoplasmic. Residues 159-179 (AVSLAVWALVTLVVLPFAVFA) traverse the membrane as a helical segment. Residues 180–209 (RLDEEQGRRQCVLVFPQPEAFWWRASRLYT) are Extracellular-facing. Residues 210-230 (LVLGFAIPVTTICALYTTLLC) form a helical membrane-spanning segment. At 231–250 (RLRAIQLDSHAKALDRAKKR) the chain is on the cytoplasmic side. A helical membrane pass occupies residues 251-271 (VTLLVAAILAVCLLCWTPYHL). Over 272–289 (STIVALTTDLPQTPLVIG) the chain is Extracellular. The helical transmembrane segment at 290–312 (ISYFITSLSYANSCLNPFLYAFL) threads the bilayer. Residues 313-329 (DDSFRRSLRQLVSCRSA) lie on the Cytoplasmic side of the membrane.

It belongs to the G-protein coupled receptor 1 family.

It localises to the cell membrane. Its function is as follows. Interacts specifically with a number of opioid ligands. Receptor for neuropeptides B and W, which may be involved in neuroendocrine system regulation, food intake and the organization of other signals. The polypeptide is Neuropeptides B/W receptor type 1 (Npbwr1) (Mus musculus (Mouse)).